The sequence spans 223 residues: Large ribosomal subunit protein uL4 (223 aa).

Positions 47-72 (GTASTKTRGEVAGGGRKPWPQKHTGR) are disordered.

Belongs to the universal ribosomal protein uL4 family. As to quaternary structure, part of the 50S ribosomal subunit.

Functionally, one of the primary rRNA binding proteins, this protein initially binds near the 5'-end of the 23S rRNA. It is important during the early stages of 50S assembly. It makes multiple contacts with different domains of the 23S rRNA in the assembled 50S subunit and ribosome. Forms part of the polypeptide exit tunnel. The sequence is that of Large ribosomal subunit protein uL4 from Fervidobacterium nodosum (strain ATCC 35602 / DSM 5306 / Rt17-B1).